Reading from the N-terminus, the 233-residue chain is Methyltransferase srdJ (233 aa).

Positions 1–32 (MFQVQTAGTRTGTSSPDTTTSEAGLGSTPPMP) are disordered. Positions 9–21 (TRTGTSSPDTTTS) are enriched in low complexity. Residues W40, W52, and G81 each coordinate S-adenosyl-L-methionine. Positions 140–146 (EISSQKY) match the Required for methyltransferase activity motif.

This sequence belongs to the methyltransferase superfamily.

Functionally, methyltransferase; part of the gene cluster that mediates the biosynthesis of sordarial, a salicylic aldehyde structurally related to the phytotoxin pyriculol. The most interesting aspect of this pathway is formation of an aromatic product from the highly reducing polyketide synthase srdA. SrdA synthesizes a reduced polyketide chain from one molecule of acetyl-CoA and five molecules of malonyl-CoA. The polyketide chain is then reductively released as an aldehyde. The oxidoreductases srdC, srdD and srdE then oxidize one of the hydroxy groups to facilitate the intramolecular aldol condensation, followed by dehydration to yield a salicylic aldehyde. This aldehyde can undergo facile reduction by endogenous reductases to yield the alcohol 1-hydroxy-2-hydroxymethyl-3-pent-1,3-dienylbenzene. The flavin-dependent srdI counteract against the propensity of the aldehydes to be reduced under physiological conditions and is responsible for reoxidizing 1-hydroxy-2-hydroxymethyl-3-pent-1,3-dienylbenzene back to the salicylic aldehyde. This salicylic aldehyde is then selectively epoxidized by the cupin-domain-containing oxidoreductase srdB to yield the epoxide, which can be hydrolyzed stereoselectively by the hydrolase srdG to give the final product sordarial. The polypeptide is Methyltransferase srdJ (Neurospora crassa (strain ATCC 24698 / 74-OR23-1A / CBS 708.71 / DSM 1257 / FGSC 987)).